A 446-amino-acid chain; its full sequence is tRNA (guanine-N(7)-)-methyltransferase non-catalytic subunit TRM82 (446 aa).

The disordered stretch occupies residues 67 to 97; sequence LTQTSEDTEQENTAPYKKQKSSVSKPIKVPK. The segment covering 87–97 has biased composition (low complexity); the sequence is SSVSKPIKVPK. WD repeat units lie at residues 107–147, 202–243, and 247–287; these read PIYN…TENC, GHVS…IVKH, and GHRE…LLSK.

It belongs to the WD repeat TRM82 family. In terms of assembly, forms a heterodimer with the catalytic subunit TRM8.

The protein resides in the nucleus. Its pathway is tRNA modification; N(7)-methylguanine-tRNA biosynthesis. In terms of biological role, required for the formation of N(7)-methylguanine at position 46 (m7G46) in tRNA. In the complex, it is required to stabilize and induce conformational changes of the catalytic subunit. This is tRNA (guanine-N(7)-)-methyltransferase non-catalytic subunit TRM82 from Debaryomyces hansenii (strain ATCC 36239 / CBS 767 / BCRC 21394 / JCM 1990 / NBRC 0083 / IGC 2968) (Yeast).